Here is a 362-residue protein sequence, read N- to C-terminus: MTQNYRITLLPGDGIGPEIMAVAVDVLKVVGQQFDIQFDFQEALIGGAAIDATGEPLPSATLDTCRQSDAVLLAAIGGYKWDSLPPHQRPEGGLLGLRAGLELFANLRPAQILPQLIDASTLKREVVEGVDIMVVRELTGGIYFGKPRGIFTTETGEKRGVNTMVYTESEIDRIGRIAFETARKRRGKLCSVDKANVLDVSQLWRDRITKLSQEYPDVELSHLYVDNAAMQLVRAPKQFDTIVTGNLFGDILSDAAAMLTGSIGMLPSASLGASGPGVFEPVHGSAPDIAGLDKANPLAQVLSAAMMLRYALNQPQAADKIEQAVLQVLEQGDRTGDIMSVGMNLLGCRAMGDSLIKALEKS.

78–91 contributes to the NAD(+) binding site; it reads GYKWDSLPPHQRPE. Substrate is bound by residues R98, R108, R136, and D226. Positions 226, 250, and 254 each coordinate Mg(2+). Residue 284 to 296 coordinates NAD(+); the sequence is GSAPDIAGLDKAN.

Belongs to the isocitrate and isopropylmalate dehydrogenases family. LeuB type 1 subfamily. Homodimer. The cofactor is Mg(2+). Requires Mn(2+) as cofactor.

The protein localises to the cytoplasm. It catalyses the reaction (2R,3S)-3-isopropylmalate + NAD(+) = 4-methyl-2-oxopentanoate + CO2 + NADH. The protein operates within amino-acid biosynthesis; L-leucine biosynthesis; L-leucine from 3-methyl-2-oxobutanoate: step 3/4. Catalyzes the oxidation of 3-carboxy-2-hydroxy-4-methylpentanoate (3-isopropylmalate) to 3-carboxy-4-methyl-2-oxopentanoate. The product decarboxylates to 4-methyl-2 oxopentanoate. The chain is 3-isopropylmalate dehydrogenase from Trichormus variabilis (strain ATCC 29413 / PCC 7937) (Anabaena variabilis).